A 149-amino-acid polypeptide reads, in one-letter code: Calmodulin (149 aa).

A2 bears the N-acetylalanine mark. EF-hand domains lie at 8 to 43 (EQIAEFKEAFALFDKDGDGTITTKELGTVMRSLGQN), 44 to 79 (PTEAELQDMINEVDADGNGTIDFPEFLSLMARKMKE), 81 to 116 (DSEEELIEAFKVFDRDGNGLISAAELRHVMTNLGEK), and 117 to 149 (LTDDEVDEMIREADIDGDGHINYEEFVRMMVSK). K14 bears the N6,N6-dimethyllysine mark. D21, D23, D25, T27, E32, D57, D59, N61, T63, E68, D94, D96, N98, and E105 together coordinate Ca(2+). K116 bears the N6,N6,N6-trimethyllysine mark. 5 residues coordinate Ca(2+): D130, D132, D134, H136, and E141.

The protein belongs to the calmodulin family. In terms of processing, the pantophobiac mutant CAM2 is undermethylated on Lys-116.

Its function is as follows. Calmodulin mediates the control of a large number of enzymes, ion channels and other proteins by Ca(2+). Among the enzymes to be stimulated by the calmodulin-Ca(2+) complex are a number of protein kinases and phosphatases. The chain is Calmodulin (CAM) from Paramecium tetraurelia.